A 162-amino-acid polypeptide reads, in one-letter code: Nucleotide-binding protein Adeh_0094 (162 aa).

Belongs to the YajQ family.

Functionally, nucleotide-binding protein. The protein is Nucleotide-binding protein Adeh_0094 of Anaeromyxobacter dehalogenans (strain 2CP-C).